A 319-amino-acid polypeptide reads, in one-letter code: Ribose-phosphate pyrophosphokinase (319 aa).

ATP-binding positions include 41-43 and 100-101; these read DGE and RQ. Mg(2+) contacts are provided by His134 and Asp176. Lys199 is an active-site residue. Residues Arg201, Asp225, and 229 to 233 each bind D-ribose 5-phosphate; that span reads DTAGT.

The protein belongs to the ribose-phosphate pyrophosphokinase family. Class I subfamily. In terms of assembly, homohexamer. Requires Mg(2+) as cofactor.

It is found in the cytoplasm. It carries out the reaction D-ribose 5-phosphate + ATP = 5-phospho-alpha-D-ribose 1-diphosphate + AMP + H(+). It functions in the pathway metabolic intermediate biosynthesis; 5-phospho-alpha-D-ribose 1-diphosphate biosynthesis; 5-phospho-alpha-D-ribose 1-diphosphate from D-ribose 5-phosphate (route I): step 1/1. In terms of biological role, involved in the biosynthesis of the central metabolite phospho-alpha-D-ribosyl-1-pyrophosphate (PRPP) via the transfer of pyrophosphoryl group from ATP to 1-hydroxyl of ribose-5-phosphate (Rib-5-P). In Clostridium perfringens (strain 13 / Type A), this protein is Ribose-phosphate pyrophosphokinase.